We begin with the raw amino-acid sequence, 180 residues long: Acireductone dioxygenase (180 aa).

The Fe(2+) site is built by H97, H99, E103, and H141. Ni(2+)-binding residues include H97, H99, E103, and H141.

This sequence belongs to the acireductone dioxygenase (ARD) family. As to quaternary structure, monomer. Fe(2+) is required as a cofactor. Requires Ni(2+) as cofactor.

The catalysed reaction is 1,2-dihydroxy-5-(methylsulfanyl)pent-1-en-3-one + O2 = 3-(methylsulfanyl)propanoate + CO + formate + 2 H(+). It carries out the reaction 1,2-dihydroxy-5-(methylsulfanyl)pent-1-en-3-one + O2 = 4-methylsulfanyl-2-oxobutanoate + formate + 2 H(+). The protein operates within amino-acid biosynthesis; L-methionine biosynthesis via salvage pathway; L-methionine from S-methyl-5-thio-alpha-D-ribose 1-phosphate: step 5/6. In terms of biological role, catalyzes 2 different reactions between oxygen and the acireductone 1,2-dihydroxy-3-keto-5-methylthiopentene (DHK-MTPene) depending upon the metal bound in the active site. Fe-containing acireductone dioxygenase (Fe-ARD) produces formate and 2-keto-4-methylthiobutyrate (KMTB), the alpha-ketoacid precursor of methionine in the methionine recycle pathway. Ni-containing acireductone dioxygenase (Ni-ARD) produces methylthiopropionate, carbon monoxide and formate, and does not lie on the methionine recycle pathway. The sequence is that of Acireductone dioxygenase from Yersinia enterocolitica serotype O:8 / biotype 1B (strain NCTC 13174 / 8081).